Reading from the N-terminus, the 277-residue chain is F420-dependent methylenetetrahydromethanopterin dehydrogenase (277 aa).

Residues 252 to 277 (MDAVSRKPHHPEGKRLSKKALMEKPE) form a disordered region.

Belongs to the MTD family.

It carries out the reaction 5,10-methylenetetrahydromethanopterin + oxidized coenzyme F420-(gamma-L-Glu)(n) + 2 H(+) = 5,10-methenyl-5,6,7,8-tetrahydromethanopterin + reduced coenzyme F420-(gamma-L-Glu)(n). It functions in the pathway one-carbon metabolism; methanogenesis from CO(2); 5,10-methylene-5,6,7,8-tetrahydromethanopterin from 5,10-methenyl-5,6,7,8-tetrahydromethanopterin (coenzyme F420 route): step 1/1. Functionally, catalyzes the reversible reduction of methenyl-H(4)MPT(+) to methylene-H(4)MPT. This chain is F420-dependent methylenetetrahydromethanopterin dehydrogenase (mtd), found in Methanocaldococcus jannaschii (strain ATCC 43067 / DSM 2661 / JAL-1 / JCM 10045 / NBRC 100440) (Methanococcus jannaschii).